We begin with the raw amino-acid sequence, 294 residues long: Melanocortin receptor 5 (294 aa).

Residues 1-29 are Extracellular-facing; that stretch reads FLDLQLNATEGNVSGPSVGNTSSPCEDMG. Residues Asn7, Asn12, and Asn20 are each glycosylated (N-linked (GlcNAc...) asparagine). The helical transmembrane segment at 30-53 threads the bilayer; sequence IEVEVFLTLGLISLLENILVIGAI. The Cytoplasmic segment spans residues 54-65; the sequence is ARNKNLHVPMYF. Residues 66–89 traverse the membrane as a helical segment; sequence FVCSLAVADMLVSLSNSWETITIY. Residues 90-106 are Extracellular-facing; the sequence is LIANKHLVLSDTSVRHL. Residues 107-130 form a helical membrane-spanning segment; it reads DNVFDSMICISLVASMCSLLAVAV. Residues 131–147 are Cytoplasmic-facing; that stretch reads DRYVTIFYALRYQHLMT. The helical transmembrane segment at 148-171 threads the bilayer; the sequence is GRRCGAIIAGIWALCTGCGPVFIV. Residues 172–178 lie on the Extracellular side of the membrane; that stretch reads YYESTYV. Residues 179–203 traverse the membrane as a helical segment; sequence VVCLVAMFLTMLLLMASLYAHMFLQ. Topologically, residues 204–231 are cytoplasmic; sequence ARAHVRRIAALPGYRSARQRTSMKGAVT. The chain crosses the membrane as a helical span at residues 232-257; it reads LAMLLGVFIVCWAPFFLHLILMISCP. Residues 258-265 lie on the Extracellular side of the membrane; sequence QNLYCSCF. The chain crosses the membrane as a helical span at residues 266 to 289; that stretch reads MSHFNMYLILIMCNSVIDPLIYAF. Residues 290-294 lie on the Cytoplasmic side of the membrane; it reads RSQEK.

This sequence belongs to the G-protein coupled receptor 1 family.

The protein resides in the cell membrane. In terms of biological role, receptor for MSH (alpha, beta and gamma) and ACTH. The activity of this receptor is mediated by G proteins which activate adenylate cyclase. This receptor is a possible mediator of the immunomodulation properties of melanocortins. This is Melanocortin receptor 5 (MC5R) from Sus scrofa (Pig).